The sequence spans 394 residues: Phosphoglycerate kinase (394 aa).

Substrate is bound by residues 21–23 (DFN), Arg-36, 59–62 (HLGR), Arg-118, and Arg-151. Residue Ser-183 is modified to Phosphoserine. Lys-201 and Gly-292 together coordinate ATP. Thr-299 is modified (phosphothreonine). Residues Glu-323 and 350–353 (GGDS) each bind ATP.

Belongs to the phosphoglycerate kinase family. In terms of assembly, monomer.

Its subcellular location is the cytoplasm. The enzyme catalyses (2R)-3-phosphoglycerate + ATP = (2R)-3-phospho-glyceroyl phosphate + ADP. It participates in carbohydrate degradation; glycolysis; pyruvate from D-glyceraldehyde 3-phosphate: step 2/5. The sequence is that of Phosphoglycerate kinase from Bacillus cereus (strain Q1).